The sequence spans 411 residues: Dual specificity protein phosphatase Mpk3 (411 aa).

The Rhodanese domain maps to 22–149 (DSKDLILLDC…FRQAFPEWCE (128 aa)). Positions 184 to 197 (DSACSSSAESSDCE) are enriched in low complexity. The tract at residues 184–209 (DSACSSSAESSDCESSSHHHHHHSHH) is disordered. One can recognise a Tyrosine-protein phosphatase domain in the interval 214–358 (APVEIIPGLL…LLSFESQLRL (145 aa)). The active-site Phosphocysteine intermediate is the Cys302.

It belongs to the protein-tyrosine phosphatase family. Non-receptor class dual specificity subfamily. Interacts (via N-terminal region) with phosphorylated rl. As to expression, ubiquitous expression in eye and wing imaginal disks. Enriched in ovary.

It is found in the cytoplasm. It catalyses the reaction O-phospho-L-tyrosyl-[protein] + H2O = L-tyrosyl-[protein] + phosphate. The catalysed reaction is O-phospho-L-seryl-[protein] + H2O = L-seryl-[protein] + phosphate. The enzyme catalyses O-phospho-L-threonyl-[protein] + H2O = L-threonyl-[protein] + phosphate. Its activity is regulated as follows. Activity abolished by tyrosine phosphatase inhibitor sodium vanadate. Activated by rl. Functionally, negatively regulates the activity of members of the MAP kinase family in response to changes in the cellular environment. Has a specificity for the ERK family. Acts as a negative regulator in a variety of developmental processes including cell differentiation and proliferation controlled by the Ras/ERK pathway. Suppresses the photoreceptor cell differentiation and wing vein formation. Required for proper oogenesis and early embryogenesis. Functions autonomously in a subset of photoreceptor progenitor cells in eye imaginal disks. Also appears to be required in surrounding non-neuronal cells for ommatidial patterning and photoreceptor differentiation. Plays a role in the maintenance of epithelial integrity during tracheal development. In Drosophila melanogaster (Fruit fly), this protein is Dual specificity protein phosphatase Mpk3 (Mkp3).